We begin with the raw amino-acid sequence, 300 residues long: ADP,ATP carrier protein 2 (300 aa).

Solcar repeat units lie at residues 8–100 (VAFI…YKQV), 113–203 (RYFI…ARGM), and 214–299 (VSWA…IKKV). Transmembrane regions (helical) follow at residues 10 to 39 (FIKD…LLLQ), 77 to 101 (LANV…KQVF), 112 to 132 (TRYF…SLCF), 181 to 201 (VSVQ…DTAR), and 213 to 233 (YVSW…SYPF). Arg82 and Lys94 together coordinate ADP. ADP is bound at residue Arg237. Residues 237-242 (RRRMMM) form an important for transport activity region. Residues 237–242 (RRRMMM) carry the Nucleotide carrier signature motif motif. The chain crosses the membrane as a helical span at residues 276 to 293 (AFSNVLRGTGGAFVLVLY).

Belongs to the mitochondrial carrier (TC 2.A.29) family. As to quaternary structure, monomer.

Its subcellular location is the mitochondrion inner membrane. The enzyme catalyses ADP(in) + ATP(out) = ADP(out) + ATP(in). With respect to regulation, the matrix-open state (m-state) is inhibited by the membrane-permeable bongkrekic acid (BKA). The cytoplasmic-open state (c-state) is inhibited by the membrane-impermeable toxic inhibitor carboxyatractyloside (CATR). ADP:ATP antiporter that mediates import of ADP into the mitochondrial matrix for ATP synthesis, and export of ATP out to fuel the cell. Cycles between the cytoplasmic-open state (c-state) and the matrix-open state (m-state): operates by the alternating access mechanism with a single substrate-binding site intermittently exposed to either the cytosolic (c-state) or matrix (m-state) side of the inner mitochondrial membrane. This Anopheles gambiae (African malaria mosquito) protein is ADP,ATP carrier protein 2.